The primary structure comprises 231 residues: Phosphatidylserine decarboxylase proenzyme (231 aa).

The Schiff-base intermediate with substrate; via pyruvic acid role is filled by serine 188. Pyruvic acid (Ser); by autocatalysis is present on serine 188.

It belongs to the phosphatidylserine decarboxylase family. PSD-A subfamily. In terms of assembly, heterodimer of a large membrane-associated beta subunit and a small pyruvoyl-containing alpha subunit. Requires pyruvate as cofactor. Post-translationally, is synthesized initially as an inactive proenzyme. Formation of the active enzyme involves a self-maturation process in which the active site pyruvoyl group is generated from an internal serine residue via an autocatalytic post-translational modification. Two non-identical subunits are generated from the proenzyme in this reaction, and the pyruvate is formed at the N-terminus of the alpha chain, which is derived from the carboxyl end of the proenzyme. The post-translation cleavage follows an unusual pathway, termed non-hydrolytic serinolysis, in which the side chain hydroxyl group of the serine supplies its oxygen atom to form the C-terminus of the beta chain, while the remainder of the serine residue undergoes an oxidative deamination to produce ammonia and the pyruvoyl prosthetic group on the alpha chain.

The protein localises to the cell membrane. It carries out the reaction a 1,2-diacyl-sn-glycero-3-phospho-L-serine + H(+) = a 1,2-diacyl-sn-glycero-3-phosphoethanolamine + CO2. It functions in the pathway phospholipid metabolism; phosphatidylethanolamine biosynthesis; phosphatidylethanolamine from CDP-diacylglycerol: step 2/2. Catalyzes the formation of phosphatidylethanolamine (PtdEtn) from phosphatidylserine (PtdSer). The chain is Phosphatidylserine decarboxylase proenzyme from Rickettsia felis (strain ATCC VR-1525 / URRWXCal2) (Rickettsia azadi).